A 322-amino-acid chain; its full sequence is Acetylglutamate kinase (322 aa).

Substrate contacts are provided by residues 85 to 86, R107, and N211; that span reads GG.

It belongs to the acetylglutamate kinase family. ArgB subfamily.

It is found in the cytoplasm. It carries out the reaction N-acetyl-L-glutamate + ATP = N-acetyl-L-glutamyl 5-phosphate + ADP. Its pathway is amino-acid biosynthesis; L-arginine biosynthesis; N(2)-acetyl-L-ornithine from L-glutamate: step 2/4. Functionally, catalyzes the ATP-dependent phosphorylation of N-acetyl-L-glutamate. The chain is Acetylglutamate kinase from Methanosarcina barkeri (strain Fusaro / DSM 804).